Here is a 1182-residue protein sequence, read N- to C-terminus: Rho GTPase-activating protein 20 (1182 aa).

The disordered stretch occupies residues 1-40 (MEAMSPQQDALGAQPGRSSSLTGMSRIAGGPGTKKKMKTL). S46 is subject to Phosphoserine. The region spanning 85-185 (TLLIDGPVEL…WLSLLQRYIA (101 aa)) is the PH domain. The Ras-associating domain maps to 194–283 (KSIPLKIFAK…TALLTQGSRD (90 aa)). In terms of domain architecture, Rho-GAP spans 365-551 (VSLPDLCEND…FLIENCCRVF (187 aa)). Phosphoserine is present on residues S704 and S730. 6 disordered regions span residues 745–772 (QTQP…KRNT), 803–839 (VASY…QKSS), 935–955 (SYSS…SSQD), 982–1011 (TQRK…GQAS), 1074–1101 (LPSC…EGPG), and 1142–1182 (SGGQ…GTDI). A compositionally biased stretch (polar residues) spans 758–772 (KQSSVTGTDVSKRNT). Basic and acidic residues predominate over residues 811–824 (SQDHPRKQAFDADP).

In terms of biological role, GTPase activator for the Rho-type GTPases by converting them to an inactive GDP-bound state. This Mus musculus (Mouse) protein is Rho GTPase-activating protein 20 (Arhgap20).